A 53-amino-acid chain; its full sequence is Conotoxin-like peptide 1 (53 aa).

The signal sequence occupies residues 1–18 (MGVKSALFIMAVFAAANV). Disulfide bonds link Cys25/Cys39, Cys32/Cys43, and Cys38/Cys50.

It is found in the secreted. The protein is Conotoxin-like peptide 1 (CTL-1) of Orgyia pseudotsugata multicapsid polyhedrosis virus (OpMNPV).